Consider the following 246-residue polypeptide: NAD(P)H-hydrate epimerase (246 aa).

Residues 12–234 enclose the YjeF N-terminal domain; sequence AAEIDKELMG…DFANKFGFEP (223 aa). 69–73 serves as a coordination point for (6S)-NADPHX; the sequence is NNGGD. 2 residues coordinate K(+): asparagine 70 and aspartate 138. Residues 142 to 148 and aspartate 173 contribute to the (6S)-NADPHX site; that span reads GFSFKPP. A K(+)-binding site is contributed by threonine 176.

It belongs to the NnrE/AIBP family. It depends on K(+) as a cofactor.

The protein resides in the cytoplasm. The protein localises to the mitochondrion. It carries out the reaction (6R)-NADHX = (6S)-NADHX. It catalyses the reaction (6R)-NADPHX = (6S)-NADPHX. Catalyzes the epimerization of the S- and R-forms of NAD(P)HX, a damaged form of NAD(P)H that is a result of enzymatic or heat-dependent hydration. This is a prerequisite for the S-specific NAD(P)H-hydrate dehydratase to allow the repair of both epimers of NAD(P)HX. The sequence is that of NAD(P)H-hydrate epimerase from Saccharomyces cerevisiae (strain ATCC 204508 / S288c) (Baker's yeast).